The primary structure comprises 461 residues: Serine carboxypeptidase-like 51 (461 aa).

The signal sequence occupies residues 1-20 (MKTTVVYLVILCLIVSCTNG). N-linked (GlcNAc...) asparagine glycans are attached at residues Asn-99 and Asn-152. Ser-166 is a catalytic residue. N-linked (GlcNAc...) asparagine glycosylation is present at Asn-340. Active-site residues include Asp-379 and His-438.

It belongs to the peptidase S10 family. As to expression, expressed in seedlings, roots, flowers and siliques.

The protein resides in the secreted. Its function is as follows. Probable carboxypeptidase. This chain is Serine carboxypeptidase-like 51 (SCPL51), found in Arabidopsis thaliana (Mouse-ear cress).